The primary structure comprises 1261 residues: Rho GTPase-activating protein 29 (1261 aa).

Residues serine 171, serine 176, serine 179, and serine 190 each carry the phosphoserine modification. Residues 192–462 (LELDNVLLKN…SAKLYDPGQE (271 aa)) enclose the F-BAR domain. Residues 296–418 (RKNEMEKQRK…EILAQLRTLV (123 aa)) are a coiled coil. Positions 481 to 501 (NVNKHLNSSQPSGFGPANSLE) are disordered. A phosphoserine mark is found at serine 499, serine 519, and serine 552. Residues 541 to 559 (SESTGGSSESRSLDSESIS) are compositionally biased toward low complexity. The segment at 541 to 600 (SESTGGSSESRSLDSESISPGDFHRKLPRTPSSGTMSSADDLDEREPPSPSETGPNSLGT) is disordered. The segment at 612-657 (THKFRKLRSPTKCRDCEGIVVFQGVECEECLLVCHRKCLENLVIIC) adopts a Phorbol-ester/DAG-type zinc-finger fold. The 216-residue stretch at 671 to 886 (AEFTQVAKKE…FLITYSQKIF (216 aa)) folds into the Rho-GAP domain. Residues serine 913 and serine 949 each carry the phosphoserine modification. Residues 981–1011 (SASQKIEDGKTPKPLSLKSDRSTNNVERHTP) form a disordered region. Basic and acidic residues predominate over residues 998–1010 (KSDRSTNNVERHT). Serine 1019, serine 1144, and serine 1146 each carry phosphoserine. Disordered regions lie at residues 1117-1153 (HSINATQPSKPYAEPVRSVREASERRSSDSYPLAPVR) and 1178-1238 (GNEE…VNPM). Over residues 1133–1144 (RSVREASERRSS) the composition is skewed to basic and acidic residues. The interval 1258-1261 (PQFV) is interaction with PTPN13/PTPL1.

Interacts with PTPN13/PTPL1. Interacts with RAP2A via its coiled coil domain. Interacts with RASIP1. Widely expressed. Highly expressed in skeletal muscle and heart. Expressed at intermediate level in placenta, liver and pancreas. Weakly expressed in brain, lung and kidney.

GTPase activator for the Rho-type GTPases by converting them to an inactive GDP-bound state. Has strong activity toward RHOA, and weaker activity toward RAC1 and CDC42. May act as a specific effector of RAP2A to regulate Rho. In concert with RASIP1, suppresses RhoA signaling and dampens ROCK and MYH9 activities in endothelial cells and plays an essential role in blood vessel tubulogenesis. The protein is Rho GTPase-activating protein 29 (ARHGAP29) of Homo sapiens (Human).